Consider the following 268-residue polypeptide: Undecaprenyl-diphosphatase (268 aa).

The next 7 helical transmembrane spans lie at 41 to 61, 81 to 101, 106 to 126, 146 to 166, 191 to 211, 213 to 233, and 245 to 265; these read LAYS…LIYF, WLTY…PLYM, YLLL…AVIF, MTLG…LPGI, FVLV…SEGG, VATP…LVTI, and VTLV…TRIL.

Belongs to the UppP family.

The protein localises to the cell membrane. It catalyses the reaction di-trans,octa-cis-undecaprenyl diphosphate + H2O = di-trans,octa-cis-undecaprenyl phosphate + phosphate + H(+). In terms of biological role, catalyzes the dephosphorylation of undecaprenyl diphosphate (UPP). This Pyrobaculum islandicum (strain DSM 4184 / JCM 9189 / GEO3) protein is Undecaprenyl-diphosphatase.